The sequence spans 314 residues: MIEIEKPRIETVEISEDSKFGKFVVEPLERGYGTTLGNSLRRILLSSLPGAAVKNIEIEGVLHEFSAIENVVEDVTSIIMNIKKLALKIYSDEDKTLEIDVKDEGVVTAKDIMHDSDVEILNPDLKIATVSKGGHLKMRLIANAGRGYTLAEDNNTSDLPIGVIPVDSIYTPVERVNYQVENTRVGQSTNFDKLTLDVWTDGSITPQEAISLGAKIMTEHLNIFVDLTDEAQNAEIMIEKEEDHKEKVLEMSIEELDLSVRSYNCLKRAGINSVQELADKSEADMMKVRNLGRKSLEEVKFKLEDLGLGLRKED.

The tract at residues 1-228 (MIEIEKPRIE…EHLNIFVDLT (228 aa)) is alpha N-terminal domain (alpha-NTD). The tract at residues 245–314 (KEKVLEMSIE…DLGLGLRKED (70 aa)) is alpha C-terminal domain (alpha-CTD).

This sequence belongs to the RNA polymerase alpha chain family. In terms of assembly, homodimer. The RNAP catalytic core consists of 2 alpha, 1 beta, 1 beta' and 1 omega subunit. When a sigma factor is associated with the core the holoenzyme is formed, which can initiate transcription.

The catalysed reaction is RNA(n) + a ribonucleoside 5'-triphosphate = RNA(n+1) + diphosphate. Its function is as follows. DNA-dependent RNA polymerase catalyzes the transcription of DNA into RNA using the four ribonucleoside triphosphates as substrates. The polypeptide is DNA-directed RNA polymerase subunit alpha (Macrococcus caseolyticus (strain JCSC5402) (Macrococcoides caseolyticum)).